Consider the following 66-residue polypeptide: Sodium/potassium-transporting ATPase subunit gamma (66 aa).

The helical transmembrane segment at 29–46 threads the bilayer; the sequence is GGLIFAGLAFIVGLLILL.

It belongs to the FXYD family. As to quaternary structure, regulatory subunit of the sodium/potassium-transporting ATPase which is composed of a catalytic alpha subunit, an auxiliary non-catalytic beta subunit and an additional regulatory subunit. In terms of tissue distribution, expressed in the distal convoluted tubule in the kidney. Found on basolateral membranes of nephron epithelial cells.

It is found in the membrane. May be involved in forming the receptor site for cardiac glycoside binding or may modulate the transport function of the sodium ATPase. The polypeptide is Sodium/potassium-transporting ATPase subunit gamma (FXYD2) (Homo sapiens (Human)).